The chain runs to 466 residues: Pentatricopeptide repeat-containing protein At4g01400, mitochondrial (466 aa).

Residues 1–34 (MIRRPIYDFAAVFRHLTSPLSTSSRFLFYSSSEH) constitute a mitochondrion transit peptide. 8 PPR repeats span residues 118–152 (TGEI…NFTP), 153–188 (QPKH…GVMP), 189–223 (NTRS…DVVP), 224–258 (DVDS…GFVP), 259–293 (DRLS…GCNP), 294–328 (DLVH…GCSP), 329–363 (NSVS…GFSP), and 364–398 (HFSV…GETL).

It belongs to the PPR family. P subfamily.

The protein localises to the mitochondrion. The polypeptide is Pentatricopeptide repeat-containing protein At4g01400, mitochondrial (Arabidopsis thaliana (Mouse-ear cress)).